A 195-amino-acid polypeptide reads, in one-letter code: Protein aq_1444 (195 aa).

In terms of domain architecture, AMMECR1 spans 1 to 191 (MDIRELVHLG…EKEPFGEVER (191 aa)).

This chain is Protein aq_1444, found in Aquifex aeolicus (strain VF5).